The sequence spans 215 residues: MNQSILSPFGNTAEERVLNAINAFKHGTGVLVLDDEDRENEGDLIFPAETITSEQMAKLIRYGSGIVCLCITDERCQQLDLPPMVEHNNSVNKTAFTVTIEAAKGVSTGVSAADRVTTIQTAIADNAVPTDLHRPGHVFPLRAANGGVLTRRGHTEASVDLARLAGFKEAGVICEITNDDGTMARTPEIVEFAKKFGYSVLTIEDLVEYRLAHNI.

D-ribulose 5-phosphate-binding positions include 38 to 39 (RE), aspartate 43, 151 to 155 (RRGHT), and glutamate 175. Residue glutamate 39 coordinates Mg(2+). Position 154 (histidine 154) interacts with Mg(2+).

It belongs to the DHBP synthase family. In terms of assembly, homodimer. The cofactor is Mg(2+). Requires Mn(2+) as cofactor.

It carries out the reaction D-ribulose 5-phosphate = (2S)-2-hydroxy-3-oxobutyl phosphate + formate + H(+). Its pathway is cofactor biosynthesis; riboflavin biosynthesis; 2-hydroxy-3-oxobutyl phosphate from D-ribulose 5-phosphate: step 1/1. Its function is as follows. Catalyzes the conversion of D-ribulose 5-phosphate to formate and 3,4-dihydroxy-2-butanone 4-phosphate. The sequence is that of 3,4-dihydroxy-2-butanone 4-phosphate synthase from Haemophilus influenzae (strain 86-028NP).